The primary structure comprises 156 residues: Arginine repressor (156 aa).

The protein belongs to the ArgR family.

Its subcellular location is the cytoplasm. The protein operates within amino-acid biosynthesis; L-arginine biosynthesis [regulation]. Its function is as follows. Regulates arginine biosynthesis genes. This is Arginine repressor from Escherichia fergusonii (strain ATCC 35469 / DSM 13698 / CCUG 18766 / IAM 14443 / JCM 21226 / LMG 7866 / NBRC 102419 / NCTC 12128 / CDC 0568-73).